The chain runs to 518 residues: Retinal dehydrogenase 2 (518 aa).

Tyr-168 carries the phosphotyrosine modification. NAD(+) contacts are provided by residues 184 to 186 (IPW), 210 to 213 (KPAE), and 264 to 266 (STE). Catalysis depends on Glu-286, which acts as the Proton acceptor. The Nucleophile role is filled by Cys-320. The residue at position 351 (Ser-351) is a Phosphoserine. NAD(+)-binding positions include 366–370 (KQYNK) and Glu-417.

This sequence belongs to the aldehyde dehydrogenase family. In terms of assembly, homotetramer.

It is found in the cytoplasm. It carries out the reaction retinal + NAD(+) + H2O = retinoate + NADH + 2 H(+). The enzyme catalyses all-trans-retinal + NAD(+) + H2O = all-trans-retinoate + NADH + 2 H(+). The catalysed reaction is all-trans-13,14-dihydroretinal + NAD(+) + H2O = all-trans-13,14-dihydroretinoate + NADH + 2 H(+). It participates in cofactor metabolism; retinol metabolism. Functionally, catalyzes the NAD-dependent oxidation of aldehyde substrates, such as all-trans-retinal and all-trans-13,14-dihydroretinal, to their corresponding carboxylic acids, all-trans-retinoate and all-trans-13,14-dihydroretinoate, respectively. Retinoate signaling is critical for the transcriptional control of many genes, for instance it is crucial for initiation of meiosis in both male and female. Recognizes retinal as substrate, both in its free form and when bound to cellular retinol-binding protein. Can metabolize octanal and decanal, but has only very low activity with benzaldehyde, acetaldehyde and propanal. Displays complete lack of activity with citral. This chain is Retinal dehydrogenase 2 (ALDH1A2), found in Homo sapiens (Human).